Here is a 330-residue protein sequence, read N- to C-terminus: G-protein coupled bile acid receptor 1 (330 aa).

Residues 1 to 19 are Extracellular-facing; that stretch reads MTPNSTGEVPSPIPKGALG. Asparagine 4 is a glycosylation site (N-linked (GlcNAc...) asparagine). A helical transmembrane segment spans residues 20 to 40; sequence LSLALASLIITANLLLALGIA. Residues 41-50 lie on the Cytoplasmic side of the membrane; the sequence is WDRRLRSPPA. A helical transmembrane segment spans residues 51 to 71; sequence GCFFLSLLLAGLLTGLALPTL. Topologically, residues 72 to 85 are extracellular; that stretch reads PGLWNQSRRGYWSC. A glycan (N-linked (GlcNAc...) asparagine) is linked at asparagine 76. Residues cysteine 85 and cysteine 155 are joined by a disulfide bond. The helical transmembrane segment at 86 to 106 threads the bilayer; the sequence is LLVYLAPNFSFLSLLANLLLV. Topologically, residues 107 to 125 are cytoplasmic; that stretch reads HGERYMAVLRPLQPPGSIR. A helical membrane pass occupies residues 126–146; the sequence is LALLLTWAGPLLFASLPALGW. The Extracellular portion of the chain corresponds to 147–165; the sequence is NHWTPGANCSSQAIFPAPY. Residues 166-186 traverse the membrane as a helical segment; the sequence is LYLEVYGLLLPAVGAAAFLSV. Topologically, residues 187–228 are cytoplasmic; that stretch reads RVLATAHRQLQDICRLERAVCRDEPSALARALTWRQARAQAG. A helical transmembrane segment spans residues 229 to 249; that stretch reads AMLLFGLCWGPYVATLLLSVL. The Extracellular segment spans residues 250–261; sequence AYEQRPPLGPGT. Residues 262 to 282 traverse the membrane as a helical segment; sequence LLSLLSLGSASAAAVPVAMGL. The Cytoplasmic portion of the chain corresponds to 283-330; the sequence is GDQRYTAPWRAAAQRCLQGLWGRASRDSPGPSIAYHPSSQSSVDLDLN. A disordered region spans residues 309-330; that stretch reads DSPGPSIAYHPSSQSSVDLDLN. The segment covering 319–330 has biased composition (polar residues); the sequence is PSSQSSVDLDLN.

The protein belongs to the G-protein coupled receptor 1 family. As to expression, ubiquitously expressed. Expressed at higher level in spleen and placenta. Expressed at lower level in other tissues. In digestive tissues, it is expressed in stomach, duodenum, ileocecum, ileum, jejunum, ascending colon, transverse colon, descending colon, cecum and liver, but not in esophagus and rectum.

The protein resides in the cell membrane. In terms of biological role, receptor for bile acid. Bile acid-binding induces its internalization, activation of extracellular signal-regulated kinase and intracellular cAMP production. May be involved in the suppression of macrophage functions by bile acids. This Homo sapiens (Human) protein is G-protein coupled bile acid receptor 1 (GPBAR1).